The primary structure comprises 474 residues: 6-phospho-beta-galactosidase (474 aa).

D-galactose 6-phosphate-binding residues include Gln18, His115, Asn159, Glu160, and Asn296. Catalysis depends on Glu160, which acts as the Proton donor. Glu374 functions as the Nucleophile in the catalytic mechanism. Ser427, Trp428, Lys434, and Tyr436 together coordinate D-galactose 6-phosphate.

The protein belongs to the glycosyl hydrolase 1 family.

The enzyme catalyses a 6-phospho-beta-D-galactoside + H2O = D-galactose 6-phosphate + an alcohol. It functions in the pathway carbohydrate metabolism; lactose degradation; D-galactose 6-phosphate and beta-D-glucose from lactose 6-phosphate: step 1/1. This Clostridium acetobutylicum (strain ATCC 824 / DSM 792 / JCM 1419 / IAM 19013 / LMG 5710 / NBRC 13948 / NRRL B-527 / VKM B-1787 / 2291 / W) protein is 6-phospho-beta-galactosidase.